The chain runs to 203 residues: Glycerol-3-phosphate acyltransferase (203 aa).

A run of 4 helical transmembrane segments spans residues 6–26, 82–102, 118–138, and 141–161; these read LTLLMIVAAYLAGSVSSAVLV, AISLGLIAIAACLGHIYPIFF, APIGDDLAICLMASWVVLVLI, and YSSLAAIITALLAPLYTWWLD.

This sequence belongs to the PlsY family. In terms of assembly, probably interacts with PlsX.

Its subcellular location is the cell inner membrane. The catalysed reaction is an acyl phosphate + sn-glycerol 3-phosphate = a 1-acyl-sn-glycero-3-phosphate + phosphate. It functions in the pathway lipid metabolism; phospholipid metabolism. Its function is as follows. Catalyzes the transfer of an acyl group from acyl-phosphate (acyl-PO(4)) to glycerol-3-phosphate (G3P) to form lysophosphatidic acid (LPA). This enzyme utilizes acyl-phosphate as fatty acyl donor, but not acyl-CoA or acyl-ACP. This Shewanella sp. (strain MR-4) protein is Glycerol-3-phosphate acyltransferase.